The sequence spans 371 residues: Protein RecA (371 aa).

Residue 75–82 participates in ATP binding; the sequence is GPESSGKT. Positions 343 to 371 are disordered; that stretch reads KAKDEPIADEDQPIDVVPNFDDQDVEPQN.

The protein belongs to the RecA family.

It localises to the cytoplasm. Functionally, can catalyze the hydrolysis of ATP in the presence of single-stranded DNA, the ATP-dependent uptake of single-stranded DNA by duplex DNA, and the ATP-dependent hybridization of homologous single-stranded DNAs. It interacts with LexA causing its activation and leading to its autocatalytic cleavage. The sequence is that of Protein RecA from Corynebacterium urealyticum (strain ATCC 43042 / DSM 7109).